The sequence spans 231 residues: Orotidine 5'-phosphate decarboxylase (231 aa).

Residues Asp-11, Lys-34, 61-70 (DLKLHDIPNT), Thr-117, Arg-179, Gln-188, Gly-208, and Arg-209 contribute to the substrate site. The active-site Proton donor is the Lys-63.

It belongs to the OMP decarboxylase family. Type 1 subfamily. Homodimer.

The catalysed reaction is orotidine 5'-phosphate + H(+) = UMP + CO2. The protein operates within pyrimidine metabolism; UMP biosynthesis via de novo pathway; UMP from orotate: step 2/2. In terms of biological role, catalyzes the decarboxylation of orotidine 5'-monophosphate (OMP) to uridine 5'-monophosphate (UMP). This Streptococcus thermophilus (strain ATCC BAA-491 / LMD-9) protein is Orotidine 5'-phosphate decarboxylase.